We begin with the raw amino-acid sequence, 203 residues long: TATA-binding protein 2 (203 aa).

2 consecutive repeat copies span residues 28–104 (LQNI…ARII) and 118–195 (IQNI…YPVL).

The protein belongs to the TBP family. As to quaternary structure, belongs to the TFIID complex together with the TBP-associated factors (TAFs). Binds DNA as monomer. Interacts with RF2A and TFIIB. Interacts with CWZF7.

The protein resides in the nucleus. General transcription factor that functions at the core of the DNA-binding multiprotein factor TFIID. Binding of TFIID to the TATA box is the initial transcriptional step of the pre-initiation complex (PIC), playing a role in the activation of eukaryotic genes transcribed by RNA polymerase II. In Oryza sativa subsp. japonica (Rice), this protein is TATA-binding protein 2 (TBP2).